The following is a 396-amino-acid chain: Subtilisin-like protease 5 (396 aa).

The signal sequence occupies residues 1–20 (MTGFFTILSFSLAALSVTNA). Residues 21–116 (AQILSVPKGA…VEPDAIISQH (96 aa)) constitute a propeptide that is removed on maturation. One can recognise an Inhibitor I9 domain in the interval 37-113 (YIVVMKDDTS…VAFVEPDAII (77 aa)). An N-linked (GlcNAc...) asparagine glycan is attached at Asn-63. Residues 125–396 (PWGLSRLSNR…TRLLYNGSGR (272 aa)) enclose the Peptidase S8 domain. Active-site charge relay system residues include Asp-156 and His-187. N-linked (GlcNAc...) asparagine glycans are attached at residues Asn-230 and Asn-248. Catalysis depends on Ser-342, which acts as the Charge relay system. Over residues 377–389 (TIRNPGPDTTTRL) the composition is skewed to polar residues. Positions 377–396 (TIRNPGPDTTTRLLYNGSGR) are disordered. An N-linked (GlcNAc...) asparagine glycan is attached at Asn-392.

Belongs to the peptidase S8 family.

It is found in the secreted. Its function is as follows. Secreted subtilisin-like serine protease with keratinolytic activity that contributes to pathogenicity. The chain is Subtilisin-like protease 5 (SUB5) from Arthroderma benhamiae (Trichophyton mentagrophytes).